The following is a 108-amino-acid chain: MNLLNKSLEENGSFLTALYIIVGFLALYLLGRALQAFVQAADACCLFWYTWVVIPGAKGTAFVYKYTYGRKLNNPELEAVIVNEFPKNGWNNKNPANFQDAQRDKLYS.

At Met1 to Glu10 the chain is on the virion surface side. The chain crosses the membrane as a helical span at residues Asn11–Gly31. Residues Arg32–Ser108 lie on the Intravirion side of the membrane. The interval Asn88 to Ser108 is disordered. The span at Gly89–Asp100 shows a compositional bias: polar residues.

This sequence belongs to the gammacoronaviruses E protein family. In terms of assembly, homooligomer. Interacts with the M membrane protein in the budding compartment of the host cell, which is located between endoplasmic reticulum and the Golgi complex. The cytoplasmic tails of both proteins are important for this function. Interacts with Nucleoprotein.

It localises to the host Golgi apparatus membrane. Plays a central role in virus morphogenesis and assembly. Acts as a viroporin and self-assembles in host membranes forming pentameric protein-lipid pores that allow ion transport. Also plays a role in the induction of apoptosis. The chain is Envelope small membrane protein from Gallus gallus (Chicken).